Consider the following 357-residue polypeptide: Chorismate synthase (357 aa).

Arg-47 contacts NADP(+). FMN contacts are provided by residues 123 to 125, Gly-281, 296 to 300, and Arg-324; these read RSS and KPTSS.

It belongs to the chorismate synthase family. In terms of assembly, homotetramer. Requires FMNH2 as cofactor.

The enzyme catalyses 5-O-(1-carboxyvinyl)-3-phosphoshikimate = chorismate + phosphate. It participates in metabolic intermediate biosynthesis; chorismate biosynthesis; chorismate from D-erythrose 4-phosphate and phosphoenolpyruvate: step 7/7. In terms of biological role, catalyzes the anti-1,4-elimination of the C-3 phosphate and the C-6 proR hydrogen from 5-enolpyruvylshikimate-3-phosphate (EPSP) to yield chorismate, which is the branch point compound that serves as the starting substrate for the three terminal pathways of aromatic amino acid biosynthesis. This reaction introduces a second double bond into the aromatic ring system. The protein is Chorismate synthase of Chlamydia muridarum (strain MoPn / Nigg).